The chain runs to 674 residues: Alpha-L-arabinofuranosidase 2 (674 aa).

A signal peptide spans methionine 1 to serine 24. Residues asparagine 48, asparagine 180, asparagine 199, asparagine 210, asparagine 361, asparagine 522, and asparagine 548 are each glycosylated (N-linked (GlcNAc...) asparagine).

It belongs to the glycosyl hydrolase 51 family. High expression in flowers, siliques and stems. Observed in the vasculature of older root tissue, at the tip of anthers and in the petal blade of fully developed flowers, in floral abscission zones and in silique replum tissue. Expressed in the cambium and phloem, but not in the xylem or in the vascular system of floral tissues.

The protein resides in the secreted. It localises to the extracellular space. The protein localises to the extracellular matrix. The enzyme catalyses Hydrolysis of terminal non-reducing alpha-L-arabinofuranoside residues in alpha-L-arabinosides.. Functionally, may be involved in the coordinated dissolution of the cell wall matrix during abscission and in the secondary cell wall formation in xylem vessels. The chain is Alpha-L-arabinofuranosidase 2 (ASD2) from Arabidopsis thaliana (Mouse-ear cress).